The following is a 101-amino-acid chain: Large ribosomal subunit protein uL24 (101 aa).

The protein belongs to the universal ribosomal protein uL24 family. Part of the 50S ribosomal subunit.

One of two assembly initiator proteins, it binds directly to the 5'-end of the 23S rRNA, where it nucleates assembly of the 50S subunit. Its function is as follows. One of the proteins that surrounds the polypeptide exit tunnel on the outside of the subunit. This is Large ribosomal subunit protein uL24 from Streptococcus gordonii (strain Challis / ATCC 35105 / BCRC 15272 / CH1 / DL1 / V288).